The following is an 883-amino-acid chain: Leucine--tRNA ligase (883 aa).

Residues 43–53 (PYPSGRIHIGH) carry the 'HIGH' region motif. The 'KMSKS' region motif lies at 630–634 (KMSKS). ATP is bound at residue Lys-633.

The protein belongs to the class-I aminoacyl-tRNA synthetase family.

It localises to the cytoplasm. It catalyses the reaction tRNA(Leu) + L-leucine + ATP = L-leucyl-tRNA(Leu) + AMP + diphosphate. The chain is Leucine--tRNA ligase from Nitrobacter winogradskyi (strain ATCC 25391 / DSM 10237 / CIP 104748 / NCIMB 11846 / Nb-255).